The following is a 551-amino-acid chain: Membrane protein insertase YidC (551 aa).

The chain crosses the membrane as a helical span at residues 3–23 (ANHIRILLLVTIAIMLISLMG). Residues 30–43 (PSNSSQSQTTQTQQ) are compositionally biased toward low complexity. A disordered region spans residues 30–61 (PSNSSQSQTTQTQQDNSHYNSDTPATTNVSTS). A compositionally biased stretch (polar residues) spans 44 to 61 (DNSHYNSDTPATTNVSTS). The next 3 membrane-spanning stretches (helical) occupy residues 361-381 (LVGN…LIFY), 431-451 (LSGC…YWVL), and 504-524 (IMMF…SGLV).

The protein belongs to the OXA1/ALB3/YidC family. Type 1 subfamily. As to quaternary structure, interacts with the Sec translocase complex via SecD. Specifically interacts with transmembrane segments of nascent integral membrane proteins during membrane integration.

It is found in the cell inner membrane. Functionally, required for the insertion and/or proper folding and/or complex formation of integral membrane proteins into the membrane. Involved in integration of membrane proteins that insert both dependently and independently of the Sec translocase complex, as well as at least some lipoproteins. Aids folding of multispanning membrane proteins. This chain is Membrane protein insertase YidC, found in Francisella philomiragia subsp. philomiragia (strain ATCC 25017 / CCUG 19701 / FSC 153 / O#319-036).